Here is a 659-residue protein sequence, read N- to C-terminus: Probable acyl-coenzyme A oxidase acox-1.5 (659 aa).

Residues 148-151, 156-157, and Gly190 contribute to the FAD site; these read YAQT and GT. Substrate contacts are provided by residues 284-287 and Arg294; that span reads KVGY. FAD contacts are provided by residues Arg319 and 339–342; that span reads QQYR. ATP contacts are provided by His395 and Gln403. Position 410 (Gly410) interacts with FAD. 432-433 is a binding site for substrate; sequence YE. Residue Glu433 is the Proton acceptor of the active site. Glu435 lines the FAD pocket. Position 524 to 527 (524 to 527) interacts with ATP; that stretch reads KAAR. The short motif at 657 to 659 is the Microbody targeting signal element; sequence SKL.

Belongs to the acyl-CoA oxidase family. In terms of assembly, homodimer. FAD serves as cofactor.

It localises to the peroxisome. It functions in the pathway lipid metabolism; peroxisomal fatty acid beta-oxidation. Activated by ATP. ATP binding leads to a conformational change that promotes FAD cofactor binding and enzyme activity. ATP binding likely occurs during acox-1.5 folding and/or dimer formation. Its function is as follows. Involved in the first step of peroxisomal beta-oxidation by catalyzing the desaturation of fatty acid-derived side chains. The sequence is that of Probable acyl-coenzyme A oxidase acox-1.5 from Caenorhabditis elegans.